Here is a 550-residue protein sequence, read N- to C-terminus: Sterol O-acyltransferase 1 (550 aa).

M1 is subject to N-acetylmethionine. Residues 1-36 form a disordered region; that stretch reads MVGEEKMSLRNRLSKSRENPEEDEDQRKPAKESLEA. Over 1–138 the chain is Cytoplasmic; it reads MVGEEKMSLR…LDELLEVDHI (138 aa). At S8 the chain carries Phosphoserine. Positions 15–34 are enriched in basic and acidic residues; sequence KSRENPEEDEDQRKPAKESL. A cholesterol-binding site is contributed by H137. The chain crosses the membrane as a helical span at residues 139-160; that stretch reads RTIYHMFIALLILFILSTLVVD. Topologically, residues 161–180 are lumenal; that stretch reads YIDEGRLVLEFSLLSYAFGK. Residues 181-206 traverse the membrane as a helical segment; sequence FPTVVWTWWIMFLSTFSVPYFLFQRW. The Cytoplasmic portion of the chain corresponds to 207-218; the sequence is ATGYSKSSHPLI. The helical transmembrane segment at 219 to 244 threads the bilayer; it reads NSLFHGFLFMVFQIGILGFGPTYVVL. Topologically, residues 245–252 are lumenal; the sequence is AYTLPPAS. Residues 253–276 traverse the membrane as a helical segment; the sequence is RFIIIFEQIRFVMKAHSFVRENVP. Over 277-319 the chain is Cytoplasmic; it reads RVLNSAKEKSSTVPIPTVNQYLYFLFAPTLIYRDSYPRNPTVR. A helical transmembrane segment spans residues 320-352; the sequence is WGYVAMQFAQVFGCFFYVYYIFERLCAPLFRNI. Residues 353 to 369 lie on the Lumenal side of the membrane; the sequence is KQEPFSARVLVLCVFNS. Residues 370 to 395 form a helical membrane-spanning segment; sequence ILPGVLILFLTFFAFLHCWLNAFAEM. Topologically, residues 396 to 443 are cytoplasmic; sequence LRFGDRMFYKDWWNSTSYSNYYRTWNVVVHDWLYYYAYKDFLWFFSKR. The FYXDWWN motif motif lies at 403-409; it reads FYKDWWN. N415, R418, N421, H425, Y433, K445, and S456 together coordinate an acyl-CoA. A helical transmembrane segment spans residues 444 to 468; sequence FKSAAMLAVFAVSAVVHEYALAVCL. H460 is an active-site residue. Over 469–474 the chain is Lumenal; the sequence is SFFYPV. The helical transmembrane segment at 475–490 threads the bilayer; the sequence is LFVLFMFFGMAFNFIV. The Cytoplasmic portion of the chain corresponds to 491 to 496; that stretch reads NDSRKK. Residues 497-528 form a helical membrane-spanning segment; that stretch reads PIWNVMMWTSLFLGNGVLLCFYSQEWYARQHC. C528 and C546 are disulfide-bonded. Over 529 to 550 the chain is Lumenal; it reads PLKNPTFLDYVRPRSWTCRYVF.

Belongs to the membrane-bound acyltransferase family. Sterol o-acyltransferase subfamily. In terms of assembly, may form homo- or heterodimers. Interacts with UBIAD1. Expressed in most tissues, but most strongly in the adrenal gland. Expressed more strongly in liver Kupffer cells than in hepatocytes.

It localises to the endoplasmic reticulum membrane. It carries out the reaction a sterol + a long-chain fatty acyl-CoA = a long-chain 3-hydroxysterol ester + CoA. It catalyses the reaction cholesterol + an acyl-CoA = a cholesterol ester + CoA. The catalysed reaction is cholesterol + (9Z)-octadecenoyl-CoA = cholesteryl (9Z-octadecenoate) + CoA. The enzyme catalyses cholesterol + hexadecanoyl-CoA = cholesteryl hexadecanoate + CoA. It carries out the reaction octadecanoyl-CoA + cholesterol = cholesteryl octadecanoate + CoA. It catalyses the reaction (9Z,12Z)-octadecadienoyl-CoA + cholesterol = cholesteryl (9Z,12Z)-octadecadienoate + CoA. The catalysed reaction is (5Z,8Z,11Z,14Z)-eicosatetraenoyl-CoA + cholesterol = cholesteryl (5Z,8Z,11Z,14Z)-eicosatetraenoate + CoA. The enzyme catalyses (9Z)-hexadecenoyl-CoA + cholesterol = cholesteryl (9Z)-hexadecenoate + CoA. It carries out the reaction (11Z)-octadecenoyl-CoA + cholesterol = cholesteryl (11Z)-octadecenoate + CoA. It catalyses the reaction (7Z)-octadecenoyl-CoA + cholesterol = cholesteryl (7Z)-octadecenoate + CoA. Its function is as follows. Catalyzes the formation of fatty acid-cholesterol esters, which are less soluble in membranes than cholesterol. Plays a role in lipoprotein assembly and dietary cholesterol absorption. Preferentially utilizes oleoyl-CoA ((9Z)-octadecenoyl-CoA) as a substrate: shows a higher activity towards an acyl-CoA substrate with a double bond at the delta-9 position (9Z) than towards saturated acyl-CoA or an unsaturated acyl-CoA with a double bond at the delta-7 (7Z) or delta-11 (11Z) positions. The chain is Sterol O-acyltransferase 1 (SOAT1) from Chlorocebus aethiops (Green monkey).